The primary structure comprises 447 residues: Tubulin beta chain (447 aa).

GTP-binding residues include glutamine 11, glutamate 69, serine 138, glycine 142, threonine 143, glycine 144, asparagine 204, and asparagine 226. Glutamate 69 provides a ligand contact to Mg(2+). Residues 424-447 form a disordered region; sequence QYQEASVSDAEEEYDEEAPLEGEE. Residues 432 to 447 show a composition bias toward acidic residues; that stretch reads DAEEEYDEEAPLEGEE.

This sequence belongs to the tubulin family. Dimer of alpha and beta chains. A typical microtubule is a hollow water-filled tube with an outer diameter of 25 nm and an inner diameter of 15 nM. Alpha-beta heterodimers associate head-to-tail to form protofilaments running lengthwise along the microtubule wall with the beta-tubulin subunit facing the microtubule plus end conferring a structural polarity. Microtubules usually have 13 protofilaments but different protofilament numbers can be found in some organisms and specialized cells. Mg(2+) serves as cofactor.

Its subcellular location is the cytoplasm. The protein resides in the cytoskeleton. Tubulin is the major constituent of microtubules, a cylinder consisting of laterally associated linear protofilaments composed of alpha- and beta-tubulin heterodimers. Microtubules grow by the addition of GTP-tubulin dimers to the microtubule end, where a stabilizing cap forms. Below the cap, tubulin dimers are in GDP-bound state, owing to GTPase activity of alpha-tubulin. This is Tubulin beta chain (TUB1) from Zymoseptoria tritici (Speckled leaf blotch fungus).